The chain runs to 134 residues: Small ribosomal subunit protein uS12 (134 aa).

The segment at 1–27 is disordered; that stretch reads MPTIQQLVRKGRESFADKSKSPALNSC. Residues 10–20 are compositionally biased toward basic and acidic residues; the sequence is KGRESFADKSK. D89 is modified (3-methylthioaspartic acid). The interval 103 to 134 is disordered; the sequence is DTAGVNGRTQRRSKYGAKRPKPGQAPAAKGKK. Basic residues predominate over residues 111–123; sequence TQRRSKYGAKRPK. The segment covering 124 to 134 has biased composition (low complexity); it reads PGQAPAAKGKK.

This sequence belongs to the universal ribosomal protein uS12 family. In terms of assembly, part of the 30S ribosomal subunit. Contacts proteins S8 and S17. May interact with IF1 in the 30S initiation complex.

In terms of biological role, with S4 and S5 plays an important role in translational accuracy. Its function is as follows. Interacts with and stabilizes bases of the 16S rRNA that are involved in tRNA selection in the A site and with the mRNA backbone. Located at the interface of the 30S and 50S subunits, it traverses the body of the 30S subunit contacting proteins on the other side and probably holding the rRNA structure together. The combined cluster of proteins S8, S12 and S17 appears to hold together the shoulder and platform of the 30S subunit. In Porphyromonas gingivalis (strain ATCC 33277 / DSM 20709 / CIP 103683 / JCM 12257 / NCTC 11834 / 2561), this protein is Small ribosomal subunit protein uS12.